A 419-amino-acid polypeptide reads, in one-letter code: NF-kappa-B essential modulator (419 aa).

Residues 1–46 (MSRTPWKSQPCEMVQPSGGPAGDQDVLGEESSLGKPTMLHLPSEQG) form a disordered region. Residues 1-197 (MSRTPWKSQP…REALQQQHSV (197 aa)) are required for interaction with and ubiquitination by MARCHF2. Phosphoserine occurs at positions 31, 43, 68, and 85. Residues 44–111 (EQGAPETFQR…RLVERLSLEK (68 aa)) form an interaction with CHUK/IKBKB region. Residues 100–353 (ARRLVERLSL…KTSCQESARI (254 aa)) are a coiled coil. Glycyl lysine isopeptide (Lys-Gly) (interchain with G-Cter in ubiquitin) cross-links involve residues Lys-111, Lys-139, Lys-143, Lys-226, Lys-246, and Lys-264. An interaction with TANK region spans residues 150 to 257 (LGELQESQSR…SVVSSERNRG (108 aa)). The segment at 242–350 (DNHIKSSVVS…SRLKTSCQES (109 aa)) is ubiquitin-binding (UBAN). The self-association stretch occupies residues 246 to 365 (KSSVVSSERN…MRKRHVEVSQ (120 aa)). Positions 251 to 419 (SSERNRGLQL…LQIHVMECIE (169 aa)) are required for interaction with TNFAIP3. Lys-277 participates in a covalent cross-link: Glycyl lysine isopeptide (Lys-Gly) (interchain with G-Cter in SUMO); alternate. Lys-277 participates in a covalent cross-link: Glycyl lysine isopeptide (Lys-Gly) (interchain with G-Cter in ubiquitin); alternate. Residues Lys-283, Lys-285, Lys-292, and Lys-302 each participate in a glycyl lysine isopeptide (Lys-Gly) (interchain with G-Cter in ubiquitin) cross-link. Residue Lys-309 forms a Glycyl lysine isopeptide (Lys-Gly) (interchain with G-Cter in SUMO); alternate linkage. Lys-309 participates in a covalent cross-link: Glycyl lysine isopeptide (Lys-Gly) (interchain with G-Cter in ubiquitin); alternate. Residues 322–343 (LAERKELLQEQLEQLQREYSRL) form a leucine-zipper region. Residue Lys-326 forms a Glycyl lysine isopeptide (Lys-Gly) (interchain with G-Cter in ubiquitin) linkage. The disordered stretch occupies residues 363–394 (VSQPTLPPAPAHHSFHPALPSQRRSPPEEPPN). Residues Ser-376 and Ser-387 each carry the phosphoserine modification. Positions 382 to 419 (PSQRRSPPEEPPNFCCPKCQYQAPDMDTLQIHVMECIE) are interaction with CYLD. The segment at 389–419 (PEEPPNFCCPKCQYQAPDMDTLQIHVMECIE) adopts a CCHC NOA-type zinc-finger fold. Position 397 (Cys-397) interacts with Zn(2+). A Glycyl lysine isopeptide (Lys-Gly) (interchain with G-Cter in ubiquitin) cross-link involves residue Lys-399. Zn(2+)-binding residues include Cys-400, His-413, and Cys-417.

As to quaternary structure, homodimer; disulfide-linked. Component of the I-kappa-B-kinase (IKK) core complex consisting of CHUK, IKBKB and IKBKG; probably four alpha/CHUK-beta/IKBKB dimers are associated with four gamma/IKBKG subunits. The IKK core complex seems to associate with regulatory or adapter proteins to form a IKK-signalosome holo-complex. The IKK complex associates with TERF2IP/RAP1, leading to promote IKK-mediated phosphorylation of RELA/p65. Part of a complex composed of NCOA2, NCOA3, CHUK/IKKA, IKBKB, IKBKG and CREBBP. Interacts with COPS3, CYLD, NALP2, TRPC4AP and PIDD1. Interacts with ATM; the complex is exported from the nucleus. Interacts with TRAF6. Interacts with IKBKE. Interacts with TANK; the interaction is enhanced by IKBKE and TBK1. Part of a ternary complex consisting of TANK, IKBKB and IKBKG. Interacts with ZFAND5. Interacts with RIPK2. Interacts with TNIP1 and TNFAIP3; TNIP1 facilitates the TNFAIP3-mediated de-ubiquitination of IKBKG. Interacts with TNFAIP3; the interaction is induced by TNF stimulation and by polyubiquitin. Binds (via UBAN region) polyubiquitin; binds both 'Lys-63'-linked and linear polyubiquitin, with higher affinity for linear ubiquitin. Interacts with NLRP10. Interacts with TANK; this interaction increases in response to DNA damage. Interacts with USP10; this interaction increases in response to DNA damage. Interacts with ZC3H12A; this interaction increases in response to DNA damage. Interacts with IFIT5; the interaction synergizes the recruitment of IKK to MAP3K7 and enhances IKK phosphorylation. Interacts with TRIM29; this interaction induces IKBKG/NEMO ubiquitination and proteolytic degradation. Interacts with TRIM13; this interaction leads to IKBKG/NEMO ubiquitination. Interacts with ARFIP2. Interacts with RIPK1. Interacts with (ubiquitinated) BCL10; interaction with polyubiquitinated BCL10 via both 'Lys-63'-linked and linear ubiquitin is required for TCR-induced NF-kappa-B activation. Interacts with MARCHF2; during the late stages of macrophage viral and bacterial infection; the interaction leads to ubiquitination and degradation of IKBKG/NEMO. Phosphorylation at Ser-68 attenuates aminoterminal homodimerization. Post-translationally, polyubiquitinated on Lys-285 via 'Lys-63'-linked ubiquitin; the ubiquitination is mediated downstream of NOD2 and RIPK2 and probably plays a role in signaling by facilitating interactions with ubiquitin domain-containing proteins and activates the NF-kappa-B pathway. Polyubiquitinated on Lys-285 and Lys-399 through 'Lys-63'-linked ubiquitin; the ubiquitination is mediated by BCL10, MALT1 and TRAF6 and probably plays a role in signaling by facilitating interactions with ubiquitin domain-containing proteins and activates the NF-kappa-B pathway. Monoubiquitinated on Lys-277 and Lys-309; promotes nuclear export. Polyubiquitinated through 'Lys-27' by TRIM23; involved in antiviral innate and inflammatory responses. Linear polyubiquitinated on Lys-111, Lys-143, Lys-226, Lys-246, Lys-264, Lys-277, Lys-285, Lys-292, Lys-302, Lys-309 and Lys-326; the head-to-tail polyubiquitination is mediated by the LUBAC complex and plays a key role in NF-kappa-B activation. Deubiquitinated by USP10 in a TANK-dependent and -independent manner, leading to the negative regulation of NF-kappa-B signaling upon DNA damage. Ubiquitinated at Lys-326 by MARCHF2 following bacterial and viral infection which leads to its degradation. In terms of processing, sumoylated on Lys-277 and Lys-309 with SUMO1; the modification results in phosphorylation of Ser-85 by ATM leading to a replacement of the sumoylation by mono-ubiquitination on these residues. Neddylated by TRIM40, resulting in stabilization of NFKBIA and down-regulation of NF-kappa-B activity. Post-translationally, (Microbial infection) Cleaved by porcine reproductive and respiratory syndrome virus serine protease nsp4 after Glu-349. The cleavage inhibits NEMO proper function.

The protein localises to the cytoplasm. The protein resides in the nucleus. In terms of biological role, regulatory subunit of the IKK core complex which phosphorylates inhibitors of NF-kappa-B thus leading to the dissociation of the inhibitor/NF-kappa-B complex and ultimately the degradation of the inhibitor. Its binding to scaffolding polyubiquitin plays a key role in IKK activation by multiple signaling receptor pathways. Can recognize and bind both 'Lys-63'-linked and linear polyubiquitin upon cell stimulation, with a much highr affinity for linear polyubiquitin. Could be implicated in NF-kappa-B-mediated protection from cytokine toxicity. Essential for viral activation of IRF3. Involved in TLR3- and IFIH1-mediated antiviral innate response; this function requires 'Lys-27'-linked polyubiquitination. This is NF-kappa-B essential modulator (IKBKG) from Sus scrofa (Pig).